We begin with the raw amino-acid sequence, 177 residues long: Transcription termination/antitermination protein NusG (177 aa).

A KOW domain is found at 128-156 (ETVKVIDGPFANFTGSIEEIDYDKSKVKV).

Belongs to the NusG family.

In terms of biological role, participates in transcription elongation, termination and antitermination. Stimulates RNA polymerase pausing at U107 and U144 in the trp leader. NusG-stimulated pausing is sequence specific. Does not affect trp leader termination. The chain is Transcription termination/antitermination protein NusG from Bacillus subtilis (strain 168).